A 1358-amino-acid polypeptide reads, in one-letter code: DNA-directed RNA polymerase subunit beta (1358 aa).

Belongs to the RNA polymerase beta chain family. As to quaternary structure, the RNAP catalytic core consists of 2 alpha, 1 beta, 1 beta' and 1 omega subunit. When a sigma factor is associated with the core the holoenzyme is formed, which can initiate transcription.

The enzyme catalyses RNA(n) + a ribonucleoside 5'-triphosphate = RNA(n+1) + diphosphate. Functionally, DNA-dependent RNA polymerase catalyzes the transcription of DNA into RNA using the four ribonucleoside triphosphates as substrates. The chain is DNA-directed RNA polymerase subunit beta from Methylococcus capsulatus (strain ATCC 33009 / NCIMB 11132 / Bath).